The primary structure comprises 473 residues: Photosystem II CP43 reaction center protein (473 aa).

The propeptide occupies 1–14 (MKTLYSLRRFYPVE). Position 15 is an N-acetylthreonine (threonine 15). Position 15 is a phosphothreonine (threonine 15). Transmembrane regions (helical) follow at residues 69-93 (LFEV…PHLA), 134-155 (LLGP…KDRN), 178-200 (KALY…RKIT), 255-275 (KPFA…LSYS), and 291-312 (WFNN…ASQA). [CaMn4O5] cluster is bound at residue glutamate 367. Residues 447 to 471 (RARAAAAGFEKGIDRDFEPALSMTP) form a helical membrane-spanning segment.

It belongs to the PsbB/PsbC family. PsbC subfamily. As to quaternary structure, PSII is composed of 1 copy each of membrane proteins PsbA, PsbB, PsbC, PsbD, PsbE, PsbF, PsbH, PsbI, PsbJ, PsbK, PsbL, PsbM, PsbT, PsbX, PsbY, PsbZ, Psb30/Ycf12, at least 3 peripheral proteins of the oxygen-evolving complex and a large number of cofactors. It forms dimeric complexes. Binds multiple chlorophylls and provides some of the ligands for the Ca-4Mn-5O cluster of the oxygen-evolving complex. It may also provide a ligand for a Cl- that is required for oxygen evolution. PSII binds additional chlorophylls, carotenoids and specific lipids. serves as cofactor.

It localises to the plastid. The protein localises to the chloroplast thylakoid membrane. One of the components of the core complex of photosystem II (PSII). It binds chlorophyll and helps catalyze the primary light-induced photochemical processes of PSII. PSII is a light-driven water:plastoquinone oxidoreductase, using light energy to abstract electrons from H(2)O, generating O(2) and a proton gradient subsequently used for ATP formation. The chain is Photosystem II CP43 reaction center protein from Oenothera argillicola (Appalachian evening primrose).